Reading from the N-terminus, the 242-residue chain is Methylthioribulose-1-phosphate dehydratase (242 aa).

The residue at position 87 (Ser87) is a Phosphoserine. Residue Cys97 coordinates substrate. Zn(2+) is bound by residues His115 and His117. Residue Glu139 is the Proton donor/acceptor of the active site. His195 lines the Zn(2+) pocket.

The protein belongs to the aldolase class II family. MtnB subfamily. In terms of assembly, homotetramer. Interacts with APAF1. May interact with CASP1. Zn(2+) is required as a cofactor. Isoform 1 is ubiquitously expressed. Isoform 2 is expressed at lower levels and detected in heart, brain, pancreas, liver, placenta, skeletal muscle and kidney.

It localises to the cytoplasm. The enzyme catalyses 5-(methylsulfanyl)-D-ribulose 1-phosphate = 5-methylsulfanyl-2,3-dioxopentyl phosphate + H2O. The protein operates within amino-acid biosynthesis; L-methionine biosynthesis via salvage pathway; L-methionine from S-methyl-5-thio-alpha-D-ribose 1-phosphate: step 2/6. Functionally, catalyzes the dehydration of methylthioribulose-1-phosphate (MTRu-1-P) into 2,3-diketo-5-methylthiopentyl-1-phosphate (DK-MTP-1-P). Functions in the methionine salvage pathway, which plays a key role in cancer, apoptosis, microbial proliferation and inflammation. May inhibit the CASP1-related inflammatory response (pyroptosis), the CASP9-dependent apoptotic pathway and the cytochrome c-dependent and APAF1-mediated cell death. The polypeptide is Methylthioribulose-1-phosphate dehydratase (Homo sapiens (Human)).